Consider the following 187-residue polypeptide: UPF0301 protein SO_3346 (187 aa).

This sequence belongs to the UPF0301 (AlgH) family.

This Shewanella oneidensis (strain ATCC 700550 / JCM 31522 / CIP 106686 / LMG 19005 / NCIMB 14063 / MR-1) protein is UPF0301 protein SO_3346.